The primary structure comprises 393 residues: Exosome complex component RRP45 (393 aa).

The segment at 1–268 is ARE binding; the sequence is MRDTPLSNCE…SEITELINKA (268 aa).

Belongs to the RNase PH family. Component of the RNA exosome complex.

It localises to the cytoplasm. The protein resides in the nucleus. It is found in the nucleolus. The protein localises to the nucleoplasm. Functionally, non-catalytic component of the RNA exosome complex which has 3'-&gt;5' exoribonuclease activity and participates in a multitude of cellular RNA processing and degradation events. In the nucleus, the RNA exosome complex is involved in proper maturation of stable RNA species such as rRNA, snRNA and snoRNA, in the elimination of RNA processing by-products and non-coding 'pervasive' transcripts, such as antisense RNA species and promoter-upstream transcripts (PROMPTs), and of mRNAs with processing defects, thereby limiting or excluding their export to the cytoplasm. In the cytoplasm, the RNA exosome complex is involved in general mRNA turnover and specifically degrades inherently unstable mRNAs containing AU-rich elements (AREs) within their 3' untranslated regions, and in RNA surveillance pathways, preventing translation of aberrant mRNAs. The sequence is that of Exosome complex component RRP45 from Danio rerio (Zebrafish).